Consider the following 383-residue polypeptide: Succinyl-diaminopimelate desuccinylase (383 aa).

Histidine 73 lines the Zn(2+) pocket. Aspartate 75 is a catalytic residue. Aspartate 107 contributes to the Zn(2+) binding site. The active-site Proton acceptor is the glutamate 141. Residues glutamate 142, glutamate 170, and histidine 356 each contribute to the Zn(2+) site.

This sequence belongs to the peptidase M20A family. DapE subfamily. As to quaternary structure, homodimer. It depends on Zn(2+) as a cofactor. Co(2+) serves as cofactor.

The enzyme catalyses N-succinyl-(2S,6S)-2,6-diaminopimelate + H2O = (2S,6S)-2,6-diaminopimelate + succinate. It participates in amino-acid biosynthesis; L-lysine biosynthesis via DAP pathway; LL-2,6-diaminopimelate from (S)-tetrahydrodipicolinate (succinylase route): step 3/3. Its function is as follows. Catalyzes the hydrolysis of N-succinyl-L,L-diaminopimelic acid (SDAP), forming succinate and LL-2,6-diaminopimelate (DAP), an intermediate involved in the bacterial biosynthesis of lysine and meso-diaminopimelic acid, an essential component of bacterial cell walls. The polypeptide is Succinyl-diaminopimelate desuccinylase (Pseudomonas fluorescens (strain Pf0-1)).